The following is a 341-amino-acid chain: Uroporphyrinogen decarboxylase (341 aa).

Substrate is bound by residues 23-27 (RQAGR), Asp-73, Tyr-148, Ser-203, and His-318.

This sequence belongs to the uroporphyrinogen decarboxylase family. In terms of assembly, homodimer.

Its subcellular location is the cytoplasm. The catalysed reaction is uroporphyrinogen III + 4 H(+) = coproporphyrinogen III + 4 CO2. It participates in porphyrin-containing compound metabolism; protoporphyrin-IX biosynthesis; coproporphyrinogen-III from 5-aminolevulinate: step 4/4. Catalyzes the decarboxylation of four acetate groups of uroporphyrinogen-III to yield coproporphyrinogen-III. This is Uroporphyrinogen decarboxylase from Brucella anthropi (strain ATCC 49188 / DSM 6882 / CCUG 24695 / JCM 21032 / LMG 3331 / NBRC 15819 / NCTC 12168 / Alc 37) (Ochrobactrum anthropi).